An 856-amino-acid chain; its full sequence is Facilitated trehalose transporter Tret1 (856 aa).

Disordered stretches follow at residues 1–29 (MSGR…LKEK) and 62–202 (DPFL…KATS). Topologically, residues 1–389 (MSGRDNRGAG…LEVYRPTTNP (389 aa)) are cytoplasmic. The span at 69-80 (VSPQRHPQTVRT) shows a compositional bias: polar residues. The segment covering 133–142 (EIREHRDRQQ) has biased composition (basic and acidic residues). Residues 170-180 (GNSNTNSNKAA) are compositionally biased toward polar residues. Residues serine 247, serine 248, serine 249, serine 319, and serine 321 each carry the phosphoserine modification. The segment at 326 to 345 (LTSRQHFQQQRSISTDSRKS) is disordered. The segment covering 329–340 (RQHFQQQRSIST) has biased composition (polar residues). Residues 390–410 (IFIWTQVIAALSVSLGSLVVG) traverse the membrane as a helical segment. Over 411 to 439 (FVSAYTSPALVSMSDPNITSFTVTKDAGS) the chain is Extracellular. The N-linked (GlcNAc...) asparagine glycan is linked to asparagine 427. The helical transmembrane segment at 440-460 (WVGGIMPLAGLVGGVAGGPLI) threads the bilayer. Residues 461 to 472 (EYMGRRNTILAT) are Cytoplasmic-facing. The helical transmembrane segment at 473–493 (AVPFIVSSLLIACAVNVAMVL) threads the bilayer. Residues 494 to 496 (CGR) lie on the Extracellular side of the membrane. Residues 497–517 (FLAGFCVGIASLSLPVYLGET) traverse the membrane as a helical segment. The Cytoplasmic portion of the chain corresponds to 518 to 527 (VQPEVRGTLG). Residues 528 to 548 (LLPTAFGNIGILVCFVAGSFM) traverse the membrane as a helical segment. Asparagine 549 is a glycosylation site (N-linked (GlcNAc...) asparagine). Over 549–551 (NWS) the chain is Extracellular. Residues 552–572 (MLAFLGAALPVPFLILMFLIP) traverse the membrane as a helical segment. The Cytoplasmic portion of the chain corresponds to 573-635 (ETPRWYVSRG…ELLKRNNLKP (63 aa)). The helical transmembrane segment at 636 to 656 (LSISLGLMFFQQFSGINAVIF) threads the bilayer. Residues 657-672 (YTVQIFKDAGSTIDGN) are Extracellular-facing. A helical membrane pass occupies residues 673 to 693 (VCTIIVGVVNFVATFIGILLI). Residues 694 to 699 (DRAGRK) lie on the Cytoplasmic side of the membrane. The helical transmembrane segment at 700–720 (ILLYASDIAMVLTLFVLGGFF) threads the bilayer. Over 721 to 739 (YCKAHGPDVSHLGWLPLTC) the chain is Extracellular. Residues 740–760 (FVVYILGFSVGFGPIPWLMMG) form a helical membrane-spanning segment. Residues 761–766 (EILPAK) are Cytoplasmic-facing. A helical transmembrane segment spans residues 767–787 (IRGAAASVATSFNWTCTFVVT). Residues 788–800 (KTFQDLVGSLGAH) lie on the Extracellular side of the membrane. Residues 801 to 821 (GAFWLFGAICFVGLFFVILYV) traverse the membrane as a helical segment. Residues 822–856 (PETQGKTLEDIERKMMGRVRRMSSVANIKPLSFNM) lie on the Cytoplasmic side of the membrane. Phosphoserine occurs at positions 844 and 845.

It belongs to the major facilitator superfamily. Sugar transporter (TC 2.A.1.1) family. Trehalose transporter subfamily.

The protein localises to the cell membrane. Functionally, low-capacity facilitative transporter for trehalose. Does not transport maltose, sucrose or lactose. Mediates the bidirectional transfer of trehalose. Responsible for the transport of trehalose synthesized in the fat body and the incorporation of trehalose into other tissues that require a carbon source, thereby regulating trehalose levels in the hemolymph. The chain is Facilitated trehalose transporter Tret1 from Drosophila yakuba (Fruit fly).